A 75-amino-acid chain; its full sequence is Small ribosomal subunit protein bS18 (75 aa).

Belongs to the bacterial ribosomal protein bS18 family. As to quaternary structure, part of the 30S ribosomal subunit. Forms a tight heterodimer with protein bS6.

In terms of biological role, binds as a heterodimer with protein bS6 to the central domain of the 16S rRNA, where it helps stabilize the platform of the 30S subunit. This chain is Small ribosomal subunit protein bS18, found in Sodalis glossinidius (strain morsitans).